Consider the following 194-residue polypeptide: Peptidyl-tRNA hydrolase (194 aa).

Tyr17 is a binding site for tRNA. His22 functions as the Proton acceptor in the catalytic mechanism. Positions 68, 70, and 116 each coordinate tRNA.

Belongs to the PTH family. In terms of assembly, monomer.

It localises to the cytoplasm. The catalysed reaction is an N-acyl-L-alpha-aminoacyl-tRNA + H2O = an N-acyl-L-amino acid + a tRNA + H(+). Functionally, hydrolyzes ribosome-free peptidyl-tRNAs (with 1 or more amino acids incorporated), which drop off the ribosome during protein synthesis, or as a result of ribosome stalling. Catalyzes the release of premature peptidyl moieties from peptidyl-tRNA molecules trapped in stalled 50S ribosomal subunits, and thus maintains levels of free tRNAs and 50S ribosomes. The polypeptide is Peptidyl-tRNA hydrolase (Shewanella sediminis (strain HAW-EB3)).